The primary structure comprises 149 residues: UPF0178 protein NT01CX_0440 (149 aa).

It belongs to the UPF0178 family.

The polypeptide is UPF0178 protein NT01CX_0440 (Clostridium novyi (strain NT)).